A 1085-amino-acid polypeptide reads, in one-letter code: DNA-directed RNA polymerase subunit beta (1085 aa).

The protein belongs to the RNA polymerase beta chain family. In plastids the minimal PEP RNA polymerase catalytic core is composed of four subunits: alpha, beta, beta', and beta''. When a (nuclear-encoded) sigma factor is associated with the core the holoenzyme is formed, which can initiate transcription.

It is found in the plastid. The protein localises to the chloroplast. It carries out the reaction RNA(n) + a ribonucleoside 5'-triphosphate = RNA(n+1) + diphosphate. DNA-dependent RNA polymerase catalyzes the transcription of DNA into RNA using the four ribonucleoside triphosphates as substrates. The protein is DNA-directed RNA polymerase subunit beta of Physcomitrium patens (Spreading-leaved earth moss).